The sequence spans 96 residues: MLHTPIGRLRTMGFIEGMSLLILLFIAMPLKYWAGLPLAVTIVGSVHGGLFILYLLVLAYATFSVKWPLKWSAAGFIAAFVPFGNFLYDRGLRNYK.

A run of 3 helical transmembrane segments spans residues 14–34 (FIEG…KYWA), 38–58 (LAVT…LLVL), and 67–87 (WPLK…GNFL).

The protein localises to the cell membrane. This is an uncharacterized protein from Bacillus subtilis (strain 168).